Reading from the N-terminus, the 1415-residue chain is Non-structural polyprotein 1AB (1415 aa).

Residues 104–142 (KLIHKANALQERLRLSQEEKATLALDVQFLQHENVRLKE) adopt a coiled-coil conformation. Helical transmembrane passes span 154-174 (MKWI…GGYA), 239-259 (VFYY…LAIG), 286-306 (VLPT…TLMV), 313-333 (LLAI…LCFM), and 344-364 (GLIA…LTGT). Active-site charge relay system; for serine protease activity residues include His-461, Asp-489, and Ser-551. Positions 587-616 (VKAPSRVELLKEEIERLKAQLNSAAENPAT) form a coiled coil. O-(5'-phospho-RNA)-tyrosine is present on Tyr-693. The segment at 753–813 (FDQAKPTPAP…KNEPQPYSQT (61 aa)) is disordered. The segment covering 783–795 (SQKKEKQLEHEQQ) has biased composition (basic and acidic residues). Over residues 800 to 813 (TKPQKNEPQPYSQT) the composition is skewed to polar residues. The region spanning 1160–1286 (KHFIEFDWTR…TTPSVPDDYE (127 aa)) is the RdRp catalytic domain.

This sequence belongs to the astroviridae polyprotein 1AB family. In terms of assembly, monomer. Cleaved by the viral and host proteases. The protease is probably autocatalytically cleaved.

It is found in the host membrane. The catalysed reaction is RNA(n) + a ribonucleoside 5'-triphosphate = RNA(n+1) + diphosphate. Functionally, responsible for the cleavage of the polyprotein into functional products. In terms of biological role, covalently attached to the 5' extremity of the genomic and subgenomic RNAs. It may serve as a primer for the replicase. In Human astrovirus-4 (HAstV-4), this protein is Non-structural polyprotein 1AB (ORF1).